Consider the following 134-residue polypeptide: 6,7-dimethyl-8-ribityllumazine synthase (134 aa).

5-amino-6-(D-ribitylamino)uracil is bound by residues Phe-11, 43-45 (AYD), and 67-69 (AIV). 72–73 (DT) lines the (2S)-2-hydroxy-3-oxobutyl phosphate pocket. The active-site Proton donor is His-75. Phe-100 serves as a coordination point for 5-amino-6-(D-ribitylamino)uracil. Arg-115 contributes to the (2S)-2-hydroxy-3-oxobutyl phosphate binding site.

The protein belongs to the DMRL synthase family.

The catalysed reaction is (2S)-2-hydroxy-3-oxobutyl phosphate + 5-amino-6-(D-ribitylamino)uracil = 6,7-dimethyl-8-(1-D-ribityl)lumazine + phosphate + 2 H2O + H(+). The protein operates within cofactor biosynthesis; riboflavin biosynthesis; riboflavin from 2-hydroxy-3-oxobutyl phosphate and 5-amino-6-(D-ribitylamino)uracil: step 1/2. Catalyzes the formation of 6,7-dimethyl-8-ribityllumazine by condensation of 5-amino-6-(D-ribitylamino)uracil with 3,4-dihydroxy-2-butanone 4-phosphate. This is the penultimate step in the biosynthesis of riboflavin. The sequence is that of 6,7-dimethyl-8-ribityllumazine synthase from Halorubrum lacusprofundi (strain ATCC 49239 / DSM 5036 / JCM 8891 / ACAM 34).